The primary structure comprises 377 residues: MSPLNQSAEGLPQEASNRSLNATETSEAWDPRTLQALKISLAVVLSVITLATVLSNAFVLTTILLTRKLHTPANYLIGSLATTDLLVSILVMPISIAYTITHTWNFGQILCDIWLSSDITCCTASILHLCVIALDRYWAITDALEYSKRRTAGHAATMIAIVWAISICISIPPLFWRQAKAQEEMSDCLVNTSQISYTIYSTCGAFYIPSVLLIILYGRIYRAARNRILNPPSLYGKRFTTAHLITGSAGSSLCSLNSSLHEGHSHSAGSPLFFNHVKIKLADSALERKRISAARERKATKILGIILGAFIICWLPFFVVSLVLPICRDSCWIHPALFDFFTWLGYLNSLINPIIYTVFNEEFRQAFQKIVPFRKAS.

The disordered stretch occupies residues 1–23; that stretch reads MSPLNQSAEGLPQEASNRSLNAT. Residues 1-38 are Extracellular-facing; sequence MSPLNQSAEGLPQEASNRSLNATETSEAWDPRTLQALK. 3 N-linked (GlcNAc...) asparagine glycosylation sites follow: N5, N17, and N21. The chain crosses the membrane as a helical span at residues 39 to 64; the sequence is ISLAVVLSVITLATVLSNAFVLTTIL. Residues 65-75 are Cytoplasmic-facing; the sequence is LTRKLHTPANY. Residues 76 to 97 traverse the membrane as a helical segment; it reads LIGSLATTDLLVSILVMPISIA. The Extracellular portion of the chain corresponds to 98–109; the sequence is YTITHTWNFGQI. Residues 110–134 form a helical membrane-spanning segment; the sequence is LCDIWLSSDITCCTASILHLCVIAL. C111 and C188 form a disulfide bridge. Residues D118 and C122 each contribute to the serotonin site. The DRY motif; important for ligand-induced conformation changes signature appears at 135–137; it reads DRY. Over 135 to 154 the chain is Cytoplasmic; sequence DRYWAITDALEYSKRRTAGH. Residues 155 to 176 traverse the membrane as a helical segment; sequence AATMIAIVWAISICISIPPLFW. The Extracellular portion of the chain corresponds to 177–194; that stretch reads RQAKAQEEMSDCLVNTSQ. A helical transmembrane segment spans residues 195–218; it reads ISYTIYSTCGAFYIPSVLLIILYG. Residues 219–300 are Cytoplasmic-facing; that stretch reads RIYRAARNRI…ISAARERKAT (82 aa). A helical transmembrane segment spans residues 301–326; sequence KILGIILGAFIICWLPFFVVSLVLPI. S321 serves as a coordination point for serotonin. Residues 327–335 lie on the Extracellular side of the membrane; it reads CRDSCWIHP. Residues 336–359 traverse the membrane as a helical segment; the sequence is ALFDFFTWLGYLNSLINPIIYTVF. The NPxxY motif; important for ligand-induced conformation changes and signaling motif lies at 352 to 356; that stretch reads NPIIY. Over 360–377 the chain is Cytoplasmic; it reads NEEFRQAFQKIVPFRKAS.

The protein belongs to the G-protein coupled receptor 1 family. As to quaternary structure, homodimer. Heterodimer with HTR1B. As to expression, detected in brain neocortex and caudate nucleus (at protein level).

The protein resides in the cell membrane. Its function is as follows. G-protein coupled receptor for 5-hydroxytryptamine (serotonin). Also functions as a receptor for ergot alkaloid derivatives, various anxiolytic and antidepressant drugs and other psychoactive substances. Ligand binding causes a conformation change that triggers signaling via guanine nucleotide-binding proteins (G proteins) and modulates the activity of downstream effectors, such as adenylate cyclase. HTR1D is coupled to G(i)/G(o) G alpha proteins and mediates inhibitory neurotransmission by inhibiting adenylate cyclase activity. Regulates the release of 5-hydroxytryptamine in the brain, and thereby affects neural activity. May also play a role in regulating the release of other neurotransmitters. May play a role in vasoconstriction. This is 5-hydroxytryptamine receptor 1D from Homo sapiens (Human).